Reading from the N-terminus, the 513-residue chain is tRNA-2-methylthio-N(6)-dimethylallyladenosine synthase (513 aa).

The MTTase N-terminal domain maps to 67–185 (KTFLIKTYGC…LPEILEEAYL (119 aa)). 6 residues coordinate [4Fe-4S] cluster: C76, C112, C146, C222, C226, and C229. The region spanning 208-438 (REGNIKAWVN…NKKVACYSER (231 aa)) is the Radical SAM core domain. Residues 441 to 504 (QQYEGQTVQV…QFSLNGTFIS (64 aa)) form the TRAM domain.

The protein belongs to the methylthiotransferase family. MiaB subfamily. In terms of assembly, monomer. It depends on [4Fe-4S] cluster as a cofactor.

It localises to the cytoplasm. It catalyses the reaction N(6)-dimethylallyladenosine(37) in tRNA + (sulfur carrier)-SH + AH2 + 2 S-adenosyl-L-methionine = 2-methylsulfanyl-N(6)-dimethylallyladenosine(37) in tRNA + (sulfur carrier)-H + 5'-deoxyadenosine + L-methionine + A + S-adenosyl-L-homocysteine + 2 H(+). Its function is as follows. Catalyzes the methylthiolation of N6-(dimethylallyl)adenosine (i(6)A), leading to the formation of 2-methylthio-N6-(dimethylallyl)adenosine (ms(2)i(6)A) at position 37 in tRNAs that read codons beginning with uridine. This Staphylococcus saprophyticus subsp. saprophyticus (strain ATCC 15305 / DSM 20229 / NCIMB 8711 / NCTC 7292 / S-41) protein is tRNA-2-methylthio-N(6)-dimethylallyladenosine synthase.